The sequence spans 399 residues: Glycerol-1-phosphate dehydrogenase [NAD(P)+] (399 aa).

Residues D56, 118 to 122 (GTIHD), and 140 to 143 (TAPS) contribute to the NAD(+) site. D145 contacts substrate. S149 provides a ligand contact to NAD(+). Substrate is bound at residue D192. Residues D192 and H272 each contribute to the Ni(2+) site. Position 276 (H276) interacts with substrate. H292 contributes to the Ni(2+) binding site.

Belongs to the glycerol-1-phosphate dehydrogenase family. As to quaternary structure, homodimer. Requires Ni(2+) as cofactor.

The protein localises to the cytoplasm. It catalyses the reaction sn-glycerol 1-phosphate + NAD(+) = dihydroxyacetone phosphate + NADH + H(+). It carries out the reaction sn-glycerol 1-phosphate + NADP(+) = dihydroxyacetone phosphate + NADPH + H(+). In terms of biological role, catalyzes the NAD(P)H-dependent reduction of dihydroxyacetonephosphate (DHAP or glycerone phosphate) to glycerol 1-phosphate (G1P). The G1P thus generated is probably used for the synthesis of phosphoglycerolipids in Gram-positive bacterial species. This is Glycerol-1-phosphate dehydrogenase [NAD(P)+] from Halalkalibacterium halodurans (strain ATCC BAA-125 / DSM 18197 / FERM 7344 / JCM 9153 / C-125) (Bacillus halodurans).